Reading from the N-terminus, the 356-residue chain is cGAMP-activated phospholipase (356 aa).

The PNPLA domain occupies 15 to 206 (LSLNGGGARG…VANNPSYIGL (192 aa)). The GXGXXG signature appears at 19 to 24 (GGGARG). Positions 58-62 (GTSIG) match the GXSXG motif. The active-site Nucleophile is the S60. Residue D193 is the Proton acceptor of the active site. The DGA/G motif lies at 193-195 (DGG).

This sequence belongs to the patatin family.

It catalyses the reaction a 1,2-diacyl-sn-glycero-3-phosphocholine + H2O = a 2-acyl-sn-glycero-3-phosphocholine + a fatty acid + H(+). It carries out the reaction 1,2-di-(9Z-octadecenoyl)-sn-glycero-3-phosphoethanolamine + 2 H2O = sn-glycero-3-phosphoethanolamine + 2 (9Z)-octadecenoate + 2 H(+). With respect to regulation, phospholipase activity is specifically activated upon 3',3'-cGAMP binding, which is produced by the cognate cyclic nucleotide synthase encoded in the same operon. Functionally, effector phospholipase of a CBASS antiviral system. CBASS (cyclic oligonucleotide-based antiphage signaling system) provides immunity against bacteriophages. The CD-NTase protein (DncV) synthesizes cyclic nucleotides in response to infection; these serve as specific second messenger signals. The signals activate a diverse range of effectors, leading to bacterial cell death and thus abortive phage infection. A type II-A(GA) CBASS system. Phospholipase that is activated upon binding to the cyclic dinucleotide (CDN) second messenger 3',3'-cyclic GMP-AMP (cGAMP). Degrades phospholipids in the cell membrane. Its function is as follows. Protects E.coli against phage infection. When capV and dncV are introduced in E.coli MG1655 there is 1000-fold protection against phage P1; protection against other phage (T2, T4, T5, T6 and lambda-vir) requires the 2 subsequent genes (cap2 and cap3). Upon P1 phage infection the activating molecule is produced between 30 and 40 minutes. Activation leads to bacterial cell lysis and death, which occurs before the phage has finished its replication cycle, thus protecting non-infected bacteria by aborting the phage infection and preventing its propagation. In another paper the capV-dncV-cap2-cap3 operon gives 10(4)-10(5)-fold protection against phages lambda, T2, T4 and T6, about 1000-fold protection against P1 and 10-fold protection against T5. The chain is cGAMP-activated phospholipase from Escherichia coli (strain TW11681).